Here is a 191-residue protein sequence, read N- to C-terminus: CASP-like protein 2U4 (191 aa).

The Cytoplasmic segment spans residues M1 to R25. A helical membrane pass occupies residues L26–I46. At A47–A68 the chain is on the extracellular side. The helical transmembrane segment at F69 to L89 threads the bilayer. Residues S90–D114 are Cytoplasmic-facing. The chain crosses the membrane as a helical span at residues Q115–A135. Topologically, residues K136–R157 are extracellular. N137 carries N-linked (GlcNAc...) asparagine glycosylation. A helical membrane pass occupies residues A158–I178. Topologically, residues S179 to V191 are cytoplasmic.

It belongs to the Casparian strip membrane proteins (CASP) family. Homodimer and heterodimers.

It localises to the cell membrane. This is CASP-like protein 2U4 from Selaginella moellendorffii (Spikemoss).